The following is a 356-amino-acid chain: Peptide-N(4)-(N-acetyl-beta-glucosaminyl)asparagine amidase (356 aa).

Zn(2+) contacts are provided by Cys-129, Cys-132, Cys-163, and Cys-166. The Nucleophile role is filled by Cys-189. Catalysis depends on residues His-216 and Asp-233. Glu-236 is a substrate binding site. The segment at 300–356 (IRQNLSPSEKEELKREDEAEERELASYNADEPQEAQMPRQSGSVEWTKARGEGGSDD) is disordered. 2 stretches are compositionally biased toward basic and acidic residues: residues 307-316 (SEKEELKRED) and 346-356 (TKARGEGGSDD).

The protein belongs to the transglutaminase-like superfamily. PNGase family. Zn(2+) is required as a cofactor.

It is found in the cytoplasm. It catalyses the reaction Hydrolysis of an N(4)-(acetyl-beta-D-glucosaminyl)asparagine residue in which the glucosamine residue may be further glycosylated, to yield a (substituted) N-acetyl-beta-D-glucosaminylamine and a peptide containing an aspartate residue.. In terms of biological role, specifically deglycosylates the denatured form of N-linked glycoproteins in the cytoplasm and assists their proteasome-mediated degradation. Cleaves the beta-aspartyl-glucosamine (GlcNAc) of the glycan and the amide side chain of Asn, converting Asn to Asp. Prefers proteins containing high-mannose over those bearing complex type oligosaccharides. Can recognize misfolded proteins in the endoplasmic reticulum that are exported to the cytosol to be destroyed and deglycosylate them, while it has no activity toward native proteins. Deglycosylation is a prerequisite for subsequent proteasome-mediated degradation of some, but not all, misfolded glycoproteins. This Yarrowia lipolytica (strain CLIB 122 / E 150) (Yeast) protein is Peptide-N(4)-(N-acetyl-beta-glucosaminyl)asparagine amidase (PNG1).